The chain runs to 373 residues: Cobalt-precorrin-5B C(1)-methyltransferase (373 aa).

The protein belongs to the CbiD family.

It catalyses the reaction Co-precorrin-5B + S-adenosyl-L-methionine = Co-precorrin-6A + S-adenosyl-L-homocysteine. Its pathway is cofactor biosynthesis; adenosylcobalamin biosynthesis; cob(II)yrinate a,c-diamide from sirohydrochlorin (anaerobic route): step 6/10. In terms of biological role, catalyzes the methylation of C-1 in cobalt-precorrin-5B to form cobalt-precorrin-6A. The protein is Cobalt-precorrin-5B C(1)-methyltransferase of Polaromonas sp. (strain JS666 / ATCC BAA-500).